The following is a 637-amino-acid chain: Chaperone protein DnaK (637 aa).

Position 196 is a phosphothreonine; by autocatalysis (Thr-196). The disordered stretch occupies residues 598–637 (AEAPGADAPEGQAPQDGGSKKGGEGAVENAEYEVIDGDGK). The span at 627-637 (AEYEVIDGDGK) shows a compositional bias: acidic residues.

This sequence belongs to the heat shock protein 70 family.

Its function is as follows. Acts as a chaperone. This chain is Chaperone protein DnaK, found in Chlorobium luteolum (strain DSM 273 / BCRC 81028 / 2530) (Pelodictyon luteolum).